Here is a 92-residue protein sequence, read N- to C-terminus: Small ribosomal subunit protein uS19 (92 aa).

Belongs to the universal ribosomal protein uS19 family.

In terms of biological role, protein S19 forms a complex with S13 that binds strongly to the 16S ribosomal RNA. In Buchnera aphidicola subsp. Acyrthosiphon pisum (strain 5A), this protein is Small ribosomal subunit protein uS19.